A 196-amino-acid polypeptide reads, in one-letter code: MAGNKKINRREEILQALAEMLESNEGASRITTAKLAKQVGVSEAALYRHFPSKARMFEGLIEFIEESLMSRINRIFDEEKDTLNRIRLVMQLLLAFAERNPGLTRILSGHALMFENERLRDRINQLFERIETSLRQILRERKLREGKSFPVDENILAAQLLGQVEGSLNRFVRSDFKYLPTANFDEYWALLSAQIK.

An HTH tetR-type domain is found at 7–68; it reads INRREEILQA…GLIEFIEESL (62 aa). The H-T-H motif DNA-binding region spans 31-50; that stretch reads TTAKLAKQVGVSEAALYRHF. The stretch at 110–139 forms a coiled coil; sequence HALMFENERLRDRINQLFERIETSLRQILR.

The protein belongs to the nucleoid occlusion factor SlmA family. Homodimer. Interacts with FtsZ.

It is found in the cytoplasm. Its subcellular location is the nucleoid. In terms of biological role, required for nucleoid occlusion (NO) phenomenon, which prevents Z-ring formation and cell division over the nucleoid. Acts as a DNA-associated cell division inhibitor that binds simultaneously chromosomal DNA and FtsZ, and disrupts the assembly of FtsZ polymers. SlmA-DNA-binding sequences (SBS) are dispersed on non-Ter regions of the chromosome, preventing FtsZ polymerization at these regions. The polypeptide is Nucleoid occlusion factor SlmA (Vibrio cholerae serotype O1 (strain ATCC 39315 / El Tor Inaba N16961)).